The primary structure comprises 316 residues: Phosphate acetyltransferase (316 aa).

It belongs to the phosphate acetyltransferase and butyryltransferase family.

Its subcellular location is the cytoplasm. It carries out the reaction acetyl-CoA + phosphate = acetyl phosphate + CoA. The protein operates within metabolic intermediate biosynthesis; acetyl-CoA biosynthesis; acetyl-CoA from acetate: step 2/2. The protein is Phosphate acetyltransferase (pta) of Rhizobium meliloti (Ensifer meliloti).